A 565-amino-acid polypeptide reads, in one-letter code: NAD-dependent malic enzyme (565 aa).

Y104 functions as the Proton donor in the catalytic mechanism. R157 serves as a coordination point for NAD(+). Residue K175 is the Proton acceptor of the active site. Positions 246, 247, and 270 each coordinate a divalent metal cation. The NAD(+) site is built by D270 and N418.

The protein belongs to the malic enzymes family. Homotetramer. It depends on Mg(2+) as a cofactor. Mn(2+) is required as a cofactor.

The catalysed reaction is (S)-malate + NAD(+) = pyruvate + CO2 + NADH. The enzyme catalyses oxaloacetate + H(+) = pyruvate + CO2. The sequence is that of NAD-dependent malic enzyme from Shigella flexneri serotype 5b (strain 8401).